The following is a 318-amino-acid chain: uncharacterized protein (318 aa).

Residues 1-22 show a composition bias toward basic and acidic residues; it reads MKASQERSEARRTAHSVKEKKY. 2 disordered regions span residues 1 to 29 and 293 to 318; these read MKAS…ASPR and DDGD…DDDE.

This is an uncharacterized protein from Ictalurid herpesvirus 1 (strain Auburn) (IcHV-1).